Reading from the N-terminus, the 183-residue chain is Microfibrillar-associated protein 2 (183 aa).

Positions 1–17 (MRAAYLFLLFLPAGLLA) form a signal peptide, or 19. Position 18 is a pyrrolidone carboxylic acid (Q18). Y47, Y48, and Y50 each carry sulfotyrosine. The interval 58–94 (SEEQFQFQSQQQVQQEVIPAPTPEPGNAELEPTEPGP) is disordered. The span at 60–74 (EQFQFQSQQQVQQEV) shows a compositional bias: low complexity. Residues 153–183 (CRDKFSKCGVMASSGLCQSVAASCARSCGSC) enclose the ShKT domain. Cystine bridges form between C153–C183, C160–C176, and C169–C180.

This sequence belongs to the MFAP family. In terms of assembly, forms a ternary complex with BGN and ELN. Interacts with FBN1 (via N-terminal domain) and FBN2. In terms of processing, forms intermolecular disulfide bonds either with other MAGP-1 molecules or with other components of the microfibrils. May form transglutaminase cross-links. O-glycosylated.

It is found in the secreted. The protein resides in the extracellular space. It localises to the extracellular matrix. Component of the elastin-associated microfibrils. The sequence is that of Microfibrillar-associated protein 2 (MFAP2) from Homo sapiens (Human).